Consider the following 258-residue polypeptide: Small ribosomal subunit protein uS2 (258 aa).

Positions 222 to 258 (GKALRDQDEAEQVEPVSQEEKDEVVAEAMSEADFEEQ) are disordered.

The protein belongs to the universal ribosomal protein uS2 family.

This chain is Small ribosomal subunit protein uS2, found in Campylobacter fetus subsp. fetus (strain 82-40).